Reading from the N-terminus, the 341-residue chain is S-adenosylmethionine:tRNA ribosyltransferase-isomerase (341 aa).

It belongs to the QueA family. Monomer.

It localises to the cytoplasm. The catalysed reaction is 7-aminomethyl-7-carbaguanosine(34) in tRNA + S-adenosyl-L-methionine = epoxyqueuosine(34) in tRNA + adenine + L-methionine + 2 H(+). It functions in the pathway tRNA modification; tRNA-queuosine biosynthesis. Transfers and isomerizes the ribose moiety from AdoMet to the 7-aminomethyl group of 7-deazaguanine (preQ1-tRNA) to give epoxyqueuosine (oQ-tRNA). The chain is S-adenosylmethionine:tRNA ribosyltransferase-isomerase from Pelodictyon phaeoclathratiforme (strain DSM 5477 / BU-1).